Consider the following 685-residue polypeptide: Methionine--tRNA ligase (685 aa).

Zn(2+) contacts are provided by C142, C145, C155, and C158. A 'KMSKS' region motif is present at residues 330-334 (KMSKS). Position 333 (K333) interacts with ATP. One can recognise a tRNA-binding domain in the interval 584–685 (DFIKVDLRVA…SGAKPGDKVS (102 aa)).

Belongs to the class-I aminoacyl-tRNA synthetase family. MetG type 1 subfamily. As to quaternary structure, homodimer. Zn(2+) serves as cofactor.

It is found in the cytoplasm. It catalyses the reaction tRNA(Met) + L-methionine + ATP = L-methionyl-tRNA(Met) + AMP + diphosphate. Is required not only for elongation of protein synthesis but also for the initiation of all mRNA translation through initiator tRNA(fMet) aminoacylation. In Acinetobacter baylyi (strain ATCC 33305 / BD413 / ADP1), this protein is Methionine--tRNA ligase.